Reading from the N-terminus, the 407-residue chain is ATP phosphoribosyltransferase regulatory subunit (407 aa).

The protein belongs to the class-II aminoacyl-tRNA synthetase family. HisZ subfamily. As to quaternary structure, heteromultimer composed of HisG and HisZ subunits.

It is found in the cytoplasm. The protein operates within amino-acid biosynthesis; L-histidine biosynthesis; L-histidine from 5-phospho-alpha-D-ribose 1-diphosphate: step 1/9. Functionally, required for the first step of histidine biosynthesis. May allow the feedback regulation of ATP phosphoribosyltransferase activity by histidine. The sequence is that of ATP phosphoribosyltransferase regulatory subunit from Rippkaea orientalis (strain PCC 8801 / RF-1) (Cyanothece sp. (strain PCC 8801)).